Consider the following 378-residue polypeptide: Chaperone protein DnaJ (378 aa).

The J domain occupies 5 to 70; that stretch reads DYYEVLSVGR…DKKAAYDQFG (66 aa). The segment at 133-211 adopts a CR-type zinc-finger fold; sequence GLTKELRIPT…CHGEGRVEKS (79 aa). Zn(2+)-binding residues include C146, C149, C163, C166, C185, C188, C199, and C202. CXXCXGXG motif repeat units lie at residues 146–153, 163–170, 185–192, and 199–206; these read CDTCDGSG, CGTCHGQG, CPTCHGRG, and CNSCHGEG.

This sequence belongs to the DnaJ family. In terms of assembly, homodimer. It depends on Zn(2+) as a cofactor.

It is found in the cytoplasm. Its function is as follows. Participates actively in the response to hyperosmotic and heat shock by preventing the aggregation of stress-denatured proteins and by disaggregating proteins, also in an autonomous, DnaK-independent fashion. Unfolded proteins bind initially to DnaJ; upon interaction with the DnaJ-bound protein, DnaK hydrolyzes its bound ATP, resulting in the formation of a stable complex. GrpE releases ADP from DnaK; ATP binding to DnaK triggers the release of the substrate protein, thus completing the reaction cycle. Several rounds of ATP-dependent interactions between DnaJ, DnaK and GrpE are required for fully efficient folding. Also involved, together with DnaK and GrpE, in the DNA replication of plasmids through activation of initiation proteins. This is Chaperone protein DnaJ from Shewanella woodyi (strain ATCC 51908 / MS32).